The sequence spans 2134 residues: Tudor domain-containing protein 6 (2134 aa).

Residues Arg-287–Pro-315 are disordered. Residue Thr-292 is modified to Phosphothreonine. Tudor domains are found at residues Pro-309–Met-368, Arg-542–Leu-599, Tyr-820–Val-879, and Thr-1038–Val-1092. A disordered region spans residues Ser-1271–Pro-1296. Positions Leu-1282–Pro-1296 are enriched in basic and acidic residues. Tudor domains are found at residues Gln-1358–Leu-1417 and Cys-1570–Val-1630. Disordered regions lie at residues Lys-1699 to Lys-1733 and Leu-1860 to Gly-1885. Over residues Leu-1711 to Gly-1722 the composition is skewed to basic and acidic residues. 2 positions are modified to phosphoserine: Ser-1723 and Ser-1726. Ser-1925 is modified (phosphoserine). The span at Ala-1930–Arg-1939 shows a compositional bias: polar residues. Residues Ala-1930–Pro-1985 are disordered. Ser-1980, Ser-2063, and Ser-2115 each carry phosphoserine.

Found in a mRNP complex (i.e. messenger ribonucleoproteins which correspond to mRNA with bound proteins), at least composed of TDRD1, TDRD6, TDRD7 and DDX4. Found in a complex, at least composed of PIWIL1, PIWIL2, DDX4 and TDRD6. Interacts with Tex19.1 and probably Tex19.2. Interacts with PRMT5. Interacts with SNRPB (when methylated); to trigger spliceosome formation. In terms of processing, undergoes proteolytic cleavage near the C-terminal by an unknown protease during the transition from meiosis I to meiosis II in primary spermatocytes. As to expression, testis specific. Expressed in primary spermatocytes at post natal (PN) day 17.5. Expressed in midpachytene stage of primary spermatocytes at PN16 and in round spermatids at PN22 (at protein level).

It is found in the cytoplasm. In terms of biological role, tudor domain-containing protein involved in germ cell development, more specifically the formation of chromatoid body (during spermiogenesis), Balbiani body (during oogenesis), germ plasm (upon fertilization), and for proper miRNA expression and spliceosome maturation. Essential for RNA-dependent helicase UPF1 localization to chromatoid body, for UPF1-UPF2 and UPF1-DDX4 interactions which are required for mRNA degradation, using the extended 3' UTR-triggered nonsense-mediated mRNA decay (NMD) pathway. Involved in spliceosome maturation and mRNA splicing in prophase I spermatocytes through interaction with arginine N-methyltransferase PRMT5 and symmetrically arginine dimethylated SNRPB (small nuclear ribonucleoprotein-associated protein). The chain is Tudor domain-containing protein 6 from Mus musculus (Mouse).